The sequence spans 159 residues: Large ribosomal subunit protein uL22 (159 aa).

Belongs to the universal ribosomal protein uL22 family. As to quaternary structure, part of the 50S ribosomal subunit.

Its function is as follows. This protein binds specifically to 23S rRNA; its binding is stimulated by other ribosomal proteins, e.g. L4, L17, and L20. It is important during the early stages of 50S assembly. It makes multiple contacts with different domains of the 23S rRNA in the assembled 50S subunit and ribosome. Functionally, the globular domain of the protein is located near the polypeptide exit tunnel on the outside of the subunit, while an extended beta-hairpin is found that lines the wall of the exit tunnel in the center of the 70S ribosome. In Thermotoga sp. (strain RQ2), this protein is Large ribosomal subunit protein uL22.